Reading from the N-terminus, the 156-residue chain is dCTP deaminase (156 aa).

DCTP is bound by residues 79–84, D95, Q124, and Y138; that span reads RSSLAR.

This sequence belongs to the dCTP deaminase family. Homotrimer.

It catalyses the reaction dCTP + H2O + H(+) = dUTP + NH4(+). Its pathway is pyrimidine metabolism; dUMP biosynthesis; dUMP from dCTP (dUTP route): step 1/2. Catalyzes the deamination of dCTP to dUTP. This chain is dCTP deaminase, found in Pyrococcus furiosus (strain ATCC 43587 / DSM 3638 / JCM 8422 / Vc1).